The sequence spans 253 residues: Probable transcriptional regulatory protein RC0681 (253 aa).

Residues 1–21 (MAGHSKFKNIQHRKGAQDKKR) are disordered.

Belongs to the TACO1 family.

Its subcellular location is the cytoplasm. This chain is Probable transcriptional regulatory protein RC0681, found in Rickettsia conorii (strain ATCC VR-613 / Malish 7).